Here is a 408-residue protein sequence, read N- to C-terminus: Beta-ureidopropionase (408 aa).

The 271-residue stretch at Val90–Leu360 folds into the CN hydrolase domain. Residue Glu137 is the Proton acceptor of the active site. Catalysis depends on Lys212, which acts as the Proton donor. Cys249 (nucleophile) is an active-site residue.

The protein belongs to the carbon-nitrogen hydrolase superfamily. BUP family. As to quaternary structure, homodimer, homotetramer, homooctamer; can also form higher homooligomers.

The protein resides in the cytoplasm. The enzyme catalyses 3-(carbamoylamino)propanoate + H2O + 2 H(+) = beta-alanine + NH4(+) + CO2. The catalysed reaction is 3-(carbamoylamino)-2-methylpropanoate + H2O + 2 H(+) = (R)-3-amino-2-methylpropanoate + NH4(+) + CO2. Its pathway is amino-acid biosynthesis; beta-alanine biosynthesis. Its function is as follows. Catalyzes a late step in pyrimidine degradation. Converts N-carbamoyl-beta-aminoisobutyrate and N-carbamoyl-beta-alanine (3-ureidopropanoate) to, respectively, beta-aminoisobutyrate and beta-alanine, ammonia and carbon dioxide. Involved in the recycling of nitrogen from nucleobases to general nitrogen metabolism. The chain is Beta-ureidopropionase from Arabidopsis thaliana (Mouse-ear cress).